Reading from the N-terminus, the 132-residue chain is Large ribosomal subunit protein uL14 (132 aa).

Belongs to the universal ribosomal protein uL14 family. Part of the 50S ribosomal subunit. Forms a cluster with proteins L3 and L24e, part of which may contact the 16S rRNA in 2 intersubunit bridges.

Functionally, binds to 23S rRNA. Forms part of two intersubunit bridges in the 70S ribosome. This is Large ribosomal subunit protein uL14 from Natronomonas pharaonis (strain ATCC 35678 / DSM 2160 / CIP 103997 / JCM 8858 / NBRC 14720 / NCIMB 2260 / Gabara) (Halobacterium pharaonis).